A 669-amino-acid chain; its full sequence is MALGLQRARSTTELRKEKSRDAARSRRSQETEVLYQLAHTLPFARGVSAHLDKASIMRLTISYLRMHRLCAAGEWNQVGAGGEPLDACYLKALEGFVMVLTAEGDMAYLSENVSKHLGLSQLELIGHSIFDFIHPCDQEELQDALTPQQTLSRRKVEAPTERCFSLRMKSTLTSRGRTLNLKAATWKVLNCSGHMRAYKPPAQTSPAGSPDSEPPLQCLVLICEAIPHPGSLEPPLGRGAFLSRHSLDMKFTYCDDRIAEVAGYSPDDLIGCSAYEYIHALDSDAVSKSIHTLLSKGQAVTGQYRFLARSGGYLWTQTQATVVSGGRGPQSESIVCVHFLISQVEETGVVLSLEQTEQHSRRPIQRGAPSQKDTPNPGDSLDTPGPRILAFLHPPSLSEAALAADPRRFCSPDLRRLLGPILDGASVAATPSTPLATRHPQSPLSADLPDELPVGTENVHRLFTSGKDTEAVETDLDIAQDADALDLEMLAPYISMDDDFQLNASEQLPRAYHRPLGAVPRPRARSFHGLSPPALEPSLLPRWGSDPRLSCSSPSRGDPSASSPMAGARKRTLAQSSEDEDEGVELLGVRPPKRSPSPEHENFLLFPLSLSFLLTGGPAPGSLQDPSTPLLNLNEPLGLGPSLLSPYSDEDTTQPGGPFQPRAGSAQAD.

The segment at 1–27 is disordered; it reads MALGLQRARSTTELRKEKSRDAARSRR. The span at 10 to 27 shows a compositional bias: basic and acidic residues; sequence STTELRKEKSRDAARSRR. Residues 14-67 enclose the bHLH domain; it reads LRKEKSRDAARSRRSQETEVLYQLAHTLPFARGVSAHLDKASIMRLTISYLRMH. Residues 77-100 form a nuclear localization signal region; that stretch reads QVGAGGEPLDACYLKALEGFVMVL. PAS domains are found at residues 82 to 154 and 227 to 297; these read GEPL…LSRR and PHPG…LSKG. Residues 230 to 274 are nuclear export signal; that stretch reads GSLEPPLGRGAFLSRHSLDMKFTYCDDRIAEVAGYSPDDLIGCSA. The segment at 354 to 389 is disordered; it reads EQTEQHSRRPIQRGAPSQKDTPNPGDSLDTPGPRIL. The LRRLL motif lies at 414-418; that stretch reads LRRLL. The segment covering 430 to 444 has biased composition (polar residues); sequence TPSTPLATRHPQSPL. Residues 430-451 are disordered; the sequence is TPSTPLATRHPQSPLSADLPDE. An ODD region spans residues 452-581; that stretch reads LPVGTENVHR…TLAQSSEDED (130 aa). An NTAD region spans residues 454-506; the sequence is VGTENVHRLFTSGKDTEAVETDLDIAQDADALDLEMLAPYISMDDDFQLNASE. A Glycyl lysine isopeptide (Lys-Gly) (interchain with G-Cter in ubiquitin) cross-link involves residue K467. The short motif at 490–497 is the LAPYISMD element; sequence LAPYISMD. P492 bears the 4-hydroxyproline mark. Disordered regions lie at residues 523–600 and 619–669; these read RARS…SPEH and APGS…AQAD. 2 stretches are compositionally biased toward low complexity: residues 530 to 541 and 550 to 564; these read LSPPALEPSLLP and SCSSPSRGDPSASSP. K570 participates in a covalent cross-link: Glycyl lysine isopeptide (Lys-Gly) (interchain with G-Cter in ubiquitin). Low complexity predominate over residues 629–646; sequence PLLNLNEPLGLGPSLLSP.

Isoform 2 interacts (via ODD domain) with VHL (via beta domain). Isoform 4 interacts with HIF1A; the interaction inhibits the binding of HIF1A to hypoxia-responsive element (HRE) and HIF1A/ARNT-dependent transcriptional activation. Isoform 4 interacts with ARNT; the interaction occurs in a HIF1A- and DNA-binding-independent manner and does not induce HIF1A/ARNT-dependent transcriptional activation. Isoform 4 interacts with EPAS1. Interacts with BAD, BCL2L2 and MCL1. In terms of processing, in normoxia, hydroxylated on Pro-492 in the oxygen-dependent degradation domain (ODD) by prolyl hydroxylase(s) (PHD). The hydroxylated proline promotes interaction with VHL, initiating rapid ubiquitination and subsequent proteasomal degradation. Post-translationally, ubiquitinated; ubiquitination occurs in a VHL- and oxygen-dependent pathway and subsequently targeted for proteasomal degradation. Expressed in vascular cells (at protein level). Expressed in kidney. Expressed in lung epithelial cells. Expressed in endothelial cells (venous and arterial cells from umbilical cord and aortic endothelial cells) and in vascular smooth muscle cells (aorta). Strongly expressed in the heart, placenta, and skeletal muscle, whereas a weak expression profile was found in the lung, liver, and kidney. Expressed weakly in cell renal cell carcinoma (CC-RCC) compared to normal renal cells. Expression is down-regulated in numerous kidney tumor cells compared to non tumor kidney tissues. Isoform 2 is expressed in heart, placenta, lung, liver, skeletal muscle and pancreas and in numerous cancer cell lines. Isoform 3 and isoform 4 are weakly expressed in heart, placenta, lung, liver, skeletal muscle and pancreas. Isoform 4 is expressed in fetal tissues, such as heart, brain, thymus, lung, liver, skeletal kidney and spleen. Isoform 3 is weakly expressed in fetal tissues, such as liver and kidney.

The protein localises to the nucleus. Its subcellular location is the cytoplasm. The protein resides in the nucleus speckle. It is found in the mitochondrion. Acts as a transcriptional regulator in adaptive response to low oxygen tension. Acts as a regulator of hypoxia-inducible gene expression. Functions as an inhibitor of angiogenesis in hypoxic cells of the cornea. Plays a role in the development of the cardiorespiratory system. May also be involved in apoptosis. Functionally, attenuates the ability of transcription factor HIF1A to bind to hypoxia-responsive elements (HRE) located within the enhancer/promoter of hypoxia-inducible target genes and hence inhibits HRE-driven transcriptional activation. Also inhibits hypoxia-inducible ARNT-mediated gene expression. Its function is as follows. Attenuates the ability of transcription factor HIF1A to bind to hypoxia-responsive elements (HRE) located within the enhancer/promoter of hypoxia-inducible target genes and hence inhibits HRE-driven transcriptional activation. In terms of biological role, attenuates the ability of transcription factor HIF1A and EPAS1/HIF2A to bind to hypoxia-responsive elements (HRE) located within the enhancer/promoter of hypoxia-inducible target genes and hence inhibits HRE-driven transcriptional activation. May act as a tumor suppressor and inhibits malignant cell transformation. The polypeptide is Hypoxia-inducible factor 3-alpha (Homo sapiens (Human)).